The sequence spans 162 residues: MKFFAVLALCVVGAIASPLSADEANLVKSSWDQVKHNEVDILAAVFAAYPDIQAKFPQFAGKDLASIKDTAAFATHATRIVSFFTEVISLSGNQANLSAVYALVSKLGVDHKARGISAAQFGEFRTALVSYLQAHVSWGDNVAAAWNHALDNTYAVALKSLE.

The first 16 residues, 1–16, serve as a signal peptide directing secretion; the sequence is MKFFAVLALCVVGAIA. Residues 18–162 form the Globin domain; the sequence is PLSADEANLV…TYAVALKSLE (145 aa). Heme b contacts are provided by His-76 and His-111.

Belongs to the globin family. Homodimer.

The sequence is that of Globin CTT-VIIB-7 (CTT-7B7) from Chironomus thummi piger (Midge).